We begin with the raw amino-acid sequence, 376 residues long: Erythronate-4-phosphate dehydrogenase (376 aa).

Ser-45 and Thr-67 together coordinate substrate. Asp-147 provides a ligand contact to NAD(+). Arg-209 is an active-site residue. Asp-233 contacts NAD(+). Glu-238 is a catalytic residue. The Proton donor role is filled by His-255. Gly-258 is a binding site for NAD(+). Tyr-259 is a substrate binding site.

It belongs to the D-isomer specific 2-hydroxyacid dehydrogenase family. PdxB subfamily. As to quaternary structure, homodimer.

The protein localises to the cytoplasm. The enzyme catalyses 4-phospho-D-erythronate + NAD(+) = (R)-3-hydroxy-2-oxo-4-phosphooxybutanoate + NADH + H(+). The protein operates within cofactor biosynthesis; pyridoxine 5'-phosphate biosynthesis; pyridoxine 5'-phosphate from D-erythrose 4-phosphate: step 2/5. Functionally, catalyzes the oxidation of erythronate-4-phosphate to 3-hydroxy-2-oxo-4-phosphonooxybutanoate. The polypeptide is Erythronate-4-phosphate dehydrogenase (Shewanella baltica (strain OS223)).